The primary structure comprises 660 residues: tRNA 5-methylaminomethyl-2-thiouridine biosynthesis bifunctional protein MnmC (660 aa).

Residues 1 to 233 form a tRNA (mnm(5)s(2)U34)-methyltransferase region; the sequence is MTHSHAQLVW…KRHISHGWIA (233 aa). The FAD-dependent cmnm(5)s(2)U34 oxidoreductase stretch occupies residues 260–660; sequence VGGGLAGAAS…IRRKLDPDAL (401 aa).

This sequence in the N-terminal section; belongs to the methyltransferase superfamily. tRNA (mnm(5)s(2)U34)-methyltransferase family. It in the C-terminal section; belongs to the DAO family. FAD serves as cofactor.

The protein localises to the cytoplasm. It catalyses the reaction 5-aminomethyl-2-thiouridine(34) in tRNA + S-adenosyl-L-methionine = 5-methylaminomethyl-2-thiouridine(34) in tRNA + S-adenosyl-L-homocysteine + H(+). In terms of biological role, catalyzes the last two steps in the biosynthesis of 5-methylaminomethyl-2-thiouridine (mnm(5)s(2)U) at the wobble position (U34) in tRNA. Catalyzes the FAD-dependent demodification of cmnm(5)s(2)U34 to nm(5)s(2)U34, followed by the transfer of a methyl group from S-adenosyl-L-methionine to nm(5)s(2)U34, to form mnm(5)s(2)U34. The polypeptide is tRNA 5-methylaminomethyl-2-thiouridine biosynthesis bifunctional protein MnmC (Chromobacterium violaceum (strain ATCC 12472 / DSM 30191 / JCM 1249 / CCUG 213 / NBRC 12614 / NCIMB 9131 / NCTC 9757 / MK)).